The sequence spans 185 residues: TATA-box-binding protein 3 (185 aa).

2 repeat units span residues 7 to 84 (IENV…ANKL) and 100 to 178 (VQNI…RKEF).

The protein belongs to the TBP family.

General factor that plays a role in the activation of archaeal genes transcribed by RNA polymerase. Binds specifically to the TATA box promoter element which lies close to the position of transcription initiation. In Methanosarcina acetivorans (strain ATCC 35395 / DSM 2834 / JCM 12185 / C2A), this protein is TATA-box-binding protein 3.